A 93-amino-acid polypeptide reads, in one-letter code: Small ribosomal subunit protein uS19c (93 aa).

The protein belongs to the universal ribosomal protein uS19 family.

It is found in the plastid. It localises to the chloroplast. Protein S19 forms a complex with S13 that binds strongly to the 16S ribosomal RNA. The sequence is that of Small ribosomal subunit protein uS19c (rps19-A) from Zea mays (Maize).